A 138-amino-acid chain; its full sequence is Basic phospholipase A2 Cvv-N6 (138 aa).

Residues 1–16 (MRTFWIVALLLVGVEG) form the signal peptide. Cystine bridges form between C42–C131, C44–C60, C59–C111, C65–C138, C66–C104, C73–C97, and C91–C102. The Ca(2+) site is built by Y43, G45, and G47. Residue H63 is part of the active site. A Ca(2+)-binding site is contributed by D64. The active site involves D105.

It belongs to the phospholipase A2 family. Group II subfamily. D49 sub-subfamily. Monomer. Binds to calmodulin. Ca(2+) is required as a cofactor. As to expression, expressed by the venom gland.

It localises to the secreted. The enzyme catalyses a 1,2-diacyl-sn-glycero-3-phosphocholine + H2O = a 1-acyl-sn-glycero-3-phosphocholine + a fatty acid + H(+). Its activity is regulated as follows. Heparin and wedelolactone inhibit the myotoxic activity. The PLA2 inhibitor, para-bromophenacyl bromide (BPB), inhibits enzymatic and myotoxic activities. Functionally, snake venom phospholipase A2 (PLA2) that is myotoxic and displays moderate edema-inducing activity in rat paws. Does not show neurotoxic activity. PLA2 catalyzes the calcium-dependent hydrolysis of the 2-acyl groups in 3-sn-phosphoglycerides. The sequence is that of Basic phospholipase A2 Cvv-N6 from Crotalus viridis viridis (Prairie rattlesnake).